Consider the following 283-residue polypeptide: Pantothenate synthetase (283 aa).

30-37 (MGNLHQGH) lines the ATP pocket. H37 functions as the Proton donor in the catalytic mechanism. Q61 is a binding site for (R)-pantoate. Position 61 (Q61) interacts with beta-alanine. 149–152 (GEKD) serves as a coordination point for ATP. Position 155 (Q155) interacts with (R)-pantoate. ATP is bound by residues V178 and 186-189 (FSSR).

Belongs to the pantothenate synthetase family. In terms of assembly, homodimer.

It is found in the cytoplasm. The catalysed reaction is (R)-pantoate + beta-alanine + ATP = (R)-pantothenate + AMP + diphosphate + H(+). It participates in cofactor biosynthesis; (R)-pantothenate biosynthesis; (R)-pantothenate from (R)-pantoate and beta-alanine: step 1/1. In terms of biological role, catalyzes the condensation of pantoate with beta-alanine in an ATP-dependent reaction via a pantoyl-adenylate intermediate. The sequence is that of Pantothenate synthetase from Proteus mirabilis (strain HI4320).